We begin with the raw amino-acid sequence, 112 residues long: MVTRVGSGFSVQRVWLLLVIVVVLCGSVTQQASAWFTNDECPGVMGNRDLYEKVAWVCNDCANIFRNNDVGVMCKKDCFHTMDFLWCVYATERHGEIDQFRKWVSILRAGRK.

A signal peptide spans 1–31 (MVTRVGSGFSVQRVWLLLVIVVVLCGSVTQQ). Cystine bridges form between Cys-41–Cys-78, Cys-58–Cys-74, and Cys-61–Cys-87. Alanine amide is present on Ala-109.

As to expression, produced in the eyestalk X-organ sinus gland complex of male and female lobsters.

It is found in the secreted. Functionally, inhibits vitellogenesis in female animals. Plays a prominent role in the regulation of reproduction/molting processes. The protein is Gonad-inhibiting hormone of Homarus americanus (American lobster).